Here is a 569-residue protein sequence, read N- to C-terminus: Isochorismate synthase 1, chloroplastic (569 aa).

The N-terminal 45 residues, 1-45 (MASLQFSSQFLGSNTKTHSSIISISRSYSPTPFTRFSRKKYESCS), are a transit peptide targeting the chloroplast.

This sequence belongs to the isochorismate synthase family. As to quaternary structure, monomer. Mg(2+) is required as a cofactor. In terms of tissue distribution, leaves.

It is found in the plastid. The protein resides in the chloroplast. The catalysed reaction is chorismate = isochorismate. Its pathway is siderophore biosynthesis; salicylate biosynthesis. Functionally, isochorismate synthase involved in the synthesis of salicylic acid (SA) required for both local and systemic acquired resistance (LAR and SAR) while SA synthesized through the phenylalanine ammonium lyase (PAL) pathway seems to potentiate plant cell death. Also involved in phylloquinone (vitamin K1) synthesis. Has no isochorismate pyruvate lyase (IPL) activity. The chain is Isochorismate synthase 1, chloroplastic (ICS1) from Arabidopsis thaliana (Mouse-ear cress).